The following is a 76-amino-acid chain: DNA-directed RNA polymerase subunit omega (76 aa).

Belongs to the RNA polymerase subunit omega family. The RNAP catalytic core consists of 2 alpha, 1 beta, 1 beta' and 1 omega subunit. When a sigma factor is associated with the core the holoenzyme is formed, which can initiate transcription.

The enzyme catalyses RNA(n) + a ribonucleoside 5'-triphosphate = RNA(n+1) + diphosphate. Functionally, promotes RNA polymerase assembly. Latches the N- and C-terminal regions of the beta' subunit thereby facilitating its interaction with the beta and alpha subunits. This is DNA-directed RNA polymerase subunit omega from Staphylococcus carnosus (strain TM300).